We begin with the raw amino-acid sequence, 212 residues long: Outer surface protein C (212 aa).

Residues 1–18 form the signal peptide; that stretch reads MKKNTLSAILMTLFLFIS. A lipid anchor (N-palmitoyl cysteine) is attached at C19. C19 is lipidated: S-diacylglycerol cysteine.

The protein belongs to the OspC lipoprotein family. In terms of assembly, homodimer. Interacts with tick Ixodes ricinus salivary protein Iric-1. Binds human (host) plasminogen. The N-terminus is blocked.

The protein resides in the cell outer membrane. It is found in the cell surface. Its function is as follows. Major immunodominant protein in mammalian hosts. Required for initial stages of mammalian infection. Inhibits macrophage-mediated phagocytosis of the bacteria. Binds human plasminogen; this probably confers an extracellular protease activity on the bacteria that allows it to traverse tissue. Unlike closely related strain B31, its interaction with Ixodes ricinus salivary protein Iric-1 does not protect against antibody-mediated destruction in vitro. This Borreliella afzelii (strain PKo) (Borrelia afzelii) protein is Outer surface protein C.